Here is a 323-residue protein sequence, read N- to C-terminus: Sphingolipid delta(4)-desaturase DES1 (323 aa).

G2 carries the N-myristoyl glycine lipid modification. 2 helical membrane-spanning segments follow: residues 41–61 and 68–88; these read PNLI…FYLV and WLMF…TLAI. The short motif at 89 to 93 is the Histidine box-1 element; it reads HEISH. Residues 104-124 form a helical membrane-spanning segment; the sequence is WNRWFGMFANLSLGVPYSISF. The short motif at 128 to 132 is the Histidine box-2 element; sequence HMDHH. Helical transmembrane passes span 152–172, 184–204, and 210–230; these read FFCT…FYAF, HLEV…YYVF, and VYML…GHFI. The Histidine box-3 motif lies at 259–263; sequence HNEHH. The residue at position 307 (S307) is a Phosphoserine.

This sequence belongs to the fatty acid desaturase type 1 family. DEGS subfamily. In terms of assembly, interacts with RLBP1; the interaction increases synthesis of chromophore-precursors by DEGS1. Myristoylation can target the enzyme to the mitochondria leading to an increase in ceramide levels.

It localises to the mitochondrion membrane. The protein resides in the endoplasmic reticulum membrane. The catalysed reaction is an N-acylsphinganine + 2 Fe(II)-[cytochrome b5] + O2 + 2 H(+) = an N-acylsphing-4-enine + 2 Fe(III)-[cytochrome b5] + 2 H2O. It carries out the reaction all-trans-retinol = 11-cis-retinol. It catalyses the reaction all-trans-retinol = 9-cis-retinol. The enzyme catalyses all-trans-retinol = 13-cis-retinol. The catalysed reaction is 11-cis-retinol = 13-cis-retinol. It carries out the reaction 11-cis-retinol = 9-cis-retinol. Functionally, has sphingolipid-delta-4-desaturase activity. Converts D-erythro-sphinganine to D-erythro-sphingosine (E-sphing-4-enine). Catalyzes the equilibrium isomerization of retinols. The chain is Sphingolipid delta(4)-desaturase DES1 from Rattus norvegicus (Rat).